We begin with the raw amino-acid sequence, 449 residues long: Myb-related protein Pp1 (449 aa).

The region spanning 1 to 30 (LGNRWSAIAIPRRTDNEIKNYWNTHLKKRL) is the HTH myb-type domain. The segment at residues 5-26 (WSAIAIPRRTDNEIKNYWNTHL) is a DNA-binding region (H-T-H motif).

It is found in the nucleus. Functionally, possible transcription activator. This chain is Myb-related protein Pp1 (PP1), found in Physcomitrium patens (Spreading-leaved earth moss).